We begin with the raw amino-acid sequence, 365 residues long: Outer membrane porin protein LC (365 aa).

Positions 1–23 (MKKLTVAISAVAASVLMAMSAQA) are cleaved as a signal peptide.

Belongs to the Gram-negative porin family. As to quaternary structure, homotrimer.

It localises to the host cell outer membrane. Its function is as follows. Forms pores that allow passive diffusion of small molecules across the host cell outer membrane. This Enterobacteria phage PA-2 (Bacteriophage PA-2) protein is Outer membrane porin protein LC (LC).